Here is a 485-residue protein sequence, read N- to C-terminus: Pre-glycoprotein polyprotein GP complex (485 aa).

The N-myristoyl glycine; by host moiety is linked to residue Gly2. Topologically, residues 2–17 are extracellular; that stretch reads GQLISFFGEIPTILQE. The helical transmembrane segment at 18–33 threads the bilayer; it reads ALNIALIAVSIIATIK. Topologically, residues 34 to 58 are cytoplasmic; the sequence is GVVNVWKSGLIQLLMFVMLAGRSCS. A Zn(2+)-binding site is contributed by Cys57. Topologically, residues 59–424 are extracellular; that stretch reads VQIGHHLELE…QGRTPLSLVD (366 aa). Cystine bridges form between Cys85/Cys225, Cys271/Cys284, Cys293/Cys302, and Cys356/Cys377. Asn88, Asn128, Asn179, and Asn218 each carry an N-linked (GlcNAc...) asparagine; by host glycan. Residues Asn357, Asn365, Asn382, and Asn387 are each glycosylated (N-linked (GlcNAc...) asparagine; by host). Residues 425 to 445 traverse the membrane as a helical segment; it reads VCFWSTLFYTASIFLHLIRIP. Residues 446–485 are Cytoplasmic-facing; sequence THRHIVGEGCPKPHRLRADSTCACGLYKQKRRPLKWVRSN. Zn(2+) is bound by residues His447, His449, Cys455, His459, Cys467, and Cys469.

The protein belongs to the arenaviridae GPC protein family. Interacts with glycoprotein G2. Part of the GP complex (GP-C) together with glycoprotein G1 and glycoprotein G2. The GP-complex interacts with protein Z, which interacts with ribonucleocapsid; these interactions may induce virion budding. As to quaternary structure, homotrimer; disulfide-linked. In pre-fusion state, G1 homotrimers bind G2 homotrimers via ionic interactions. Part of the GP complex (GP-C) together with glycoprotein G2 and the stable signal peptide. The GP-complex interacts with protein Z, which interacts with ribonucleocapsid; these interactions may induce virion budding. In terms of assembly, homotrimer. Interacts with the stable signal peptide. In pre-fusion state, G2 homotrimers bind G1 homotrimers via ionic interactions. Part of the GP complex (GP-C) together with glycoprotein G1 and the stable signal peptide. Acidification in the endosome triggers rearrangements, which ultimately leads to a 6 helix bundle formed by the two heptad repeat domains (HR1 and HR2) in post-fusion state. The GP-complex interacts with protein Z, which interacts with ribonucleocapsid; these interactions may induce virion budding. Specific enzymatic cleavages in vivo yield mature proteins. GP-C polyprotein is cleaved in the endoplasmic reticulum by the host protease MBTPS1. Only cleaved glycoprotein is incorporated into virions. Post-translationally, the SSP remains stably associated with the GP complex following cleavage by signal peptidase and plays crucial roles in the trafficking of GP through the secretory pathway. In terms of processing, myristoylation is necessary for GP2-mediated fusion activity.

Its subcellular location is the virion membrane. The protein localises to the host endoplasmic reticulum membrane. It localises to the host Golgi apparatus membrane. The protein resides in the host cell membrane. In terms of biological role, functions as a cleaved signal peptide that is retained as the third component of the GP complex (GP-C). Helps to stabilize the spike complex in its native conformation. The SSP is required for efficient glycoprotein expression, post-translational maturation cleavage of G1 and G2, glycoprotein transport to the cell surface plasma membrane, formation of infectious virus particles, and acid pH-dependent glycoprotein-mediated cell fusion. Its function is as follows. Forms the virion spikes together with glycoprotein G2. The glycoprotein spike trimers are connected to the underlying matrix. Interacts with the host receptor leading to virus endocytosis. Functionally, forms the virion spikes together with glycoprotein G1. The glycoprotein spike trimers are connected to the underlying matrix. Class I viral fusion protein that directs fusion of viral and host endosomal membranes, leading to delivery of the nucleocapsid into the cytoplasm. Membrane fusion is mediated by irreversible conformational changes induced by acidification. This chain is Pre-glycoprotein polyprotein GP complex, found in Sigmodon hispidus (Hispid cotton rat).